A 431-amino-acid chain; its full sequence is Acyl transferase 8 (431 aa).

The active-site Proton acceptor is histidine 169. 3 disordered regions span residues valine 220–alanine 247, histidine 260–arginine 313, and glycine 331–threonine 400. The segment covering arginine 224 to proline 234 has biased composition (low complexity). Positions aspartate 264–arginine 273 are enriched in gly residues. Basic residues-rich tracts occupy residues glutamate 297–arginine 306 and glycine 335–proline 380. Over residues glutamine 381 to histidine 394 the composition is skewed to basic and acidic residues.

Belongs to the plant acyltransferase family.

Involved in the incorporation of ferulate into the cell wall. May act as arabinoxylan feruloyl transferase. The polypeptide is Acyl transferase 8 (Oryza sativa subsp. japonica (Rice)).